The following is a 387-amino-acid chain: Delta(12)-acyl-lipid-desaturase (387 aa).

The interval 1 to 31 is disordered; the sequence is MGAGGRMTVPNKWEGEGDEKSQKPVQRVPSA. Over residues 13–22 the composition is skewed to basic and acidic residues; the sequence is WEGEGDEKSQ. Helical transmembrane passes span 58-78 and 88-108; these read SYVL…TTYI and AAWP…WVIA. The short motif at 109 to 113 is the Histidine box-1 element; sequence HECGH. Residues 121–141 form a helical membrane-spanning segment; that stretch reads WVDDCVGLVLHSALLVPYFSW. A Histidine box-2 motif is present at residues 145 to 149; the sequence is HRRHH. Transmembrane regions (helical) follow at residues 183–203, 229–249, and 251–271; these read VMTL…LNVS, IYIS…IAAA, and GLAW…AFLV. The Histidine box-3 signature appears at 319–323; that stretch reads HVAHH.

The protein belongs to the fatty acid desaturase type 1 family.

It localises to the membrane. Its pathway is lipid metabolism; polyunsaturated fatty acid biosynthesis. Delta(12)-fatty acid desaturase producing in a heterologous system linoleic acid (18:2(9Z,12Z)) and to a lower extent hexadecadienoic acid (16:2(9Z,12Z)). The protein is Delta(12)-acyl-lipid-desaturase of Punica granatum (Pomegranate).